Consider the following 1073-residue polypeptide: Transmembrane protein 132E (1073 aa).

A signal peptide spans 1–33 (MGHFVVQGDLPWILCSLRLVIMIIAGKVSPTSS). At 34-899 (DALFSVPVPS…MTDLEIGMYA (866 aa)) the chain is on the extracellular side. N102 carries N-linked (GlcNAc...) asparagine glycosylation. The segment at 246–270 (DPDSNDECGESYPRRGGPSRGESLS) is disordered. N-linked (GlcNAc...) asparagine glycosylation is found at N324, N396, and N746. A helical transmembrane segment spans residues 900–920 (LLGVFCLAILVFLINCIVFVL). The Cytoplasmic segment spans residues 921–1073 (KYRHKRIPPE…DYMRRIKEIA (153 aa)). Polar residues predominate over residues 952–970 (TQSDLSPQTVESPSNTLEG). Residues 952–1024 (TQSDLSPQTV…PTSKRKRVKF (73 aa)) are disordered. Positions 982–994 (SGSSQTSVQSQVH) are enriched in low complexity.

The protein belongs to the TMEM132 family.

The protein localises to the membrane. In terms of biological role, required for normal inner ear hair cell function and hearing. The protein is Transmembrane protein 132E (tmem132e) of Danio rerio (Zebrafish).